Reading from the N-terminus, the 123-residue chain is Signal recognition particle 14 kDa protein (123 aa).

The disordered stretch occupies residues 99–123 (KKKPTPTTTPSSSTTAKTAAKKTKV). The segment covering 103–116 (TPTTTPSSSTTAKT) has biased composition (low complexity).

Belongs to the SRP14 family. In terms of assembly, heterodimer with srp9; binds RNA as heterodimer. Component of a signal recognition particle (SRP) complex that consists of a 7SL RNA molecule and six protein subunits: srp72, srp68, srp54, srp19, srp14 and srp9.

The protein resides in the cytoplasm. In terms of biological role, component of the signal recognition particle (SRP) complex, a ribonucleoprotein complex that mediates the cotranslational targeting of secretory and membrane proteins to the endoplasmic reticulum (ER). Srp9 together with srp14 and the Alu portion of the SRP RNA, constitutes the elongation arrest domain of SRP. The complex of srp9 and srp14 is required for SRP RNA binding. This Dictyostelium discoideum (Social amoeba) protein is Signal recognition particle 14 kDa protein (srp14-1).